Consider the following 478-residue polypeptide: Cysteine protease ATG4B (478 aa).

Residues 1-15 (MTSLPDRGVSSSSSD) show a composition bias toward polar residues. Positions 1–20 (MTSLPDRGVSSSSSDPLCEG) are disordered. Cysteine 164 functions as the Nucleophile in the catalytic mechanism. Active-site residues include aspartate 361 and histidine 363.

This sequence belongs to the peptidase C54 family. In terms of assembly, interacts with ATG8. Constitutively expressed.

The protein resides in the cytoplasm. It carries out the reaction [protein]-C-terminal L-amino acid-glycyl-phosphatidylethanolamide + H2O = [protein]-C-terminal L-amino acid-glycine + a 1,2-diacyl-sn-glycero-3-phosphoethanolamine. In terms of biological role, cysteine protease that plays a key role in autophagy by mediating both proteolytic activation and delipidation of ATG8 family proteins. The protease activity is required for proteolytic activation of ATG8 family proteins: cleaves the C-terminal amino acid of ATG8 proteins to reveal a C-terminal glycine. Exposure of the glycine at the C-terminus is essential for ATG8 proteins conjugation to phosphatidylethanolamine (PE) and insertion to membranes, which is necessary for autophagy. In addition to the protease activity, also mediates delipidation of PE-conjugated ATG8 proteins. This chain is Cysteine protease ATG4B (ATG4B), found in Oryza sativa subsp. indica (Rice).